The primary structure comprises 595 residues: CDPK-related kinase 3 (595 aa).

Residues 1–131 (MGQCYGKVNQ…GTEPEQSLDK (131 aa)) are disordered. G2 is lipidated: N-myristoyl glycine. Polar residues predominate over residues 20–37 (NTTTYVVSGDGNQIQPLT). The segment covering 111-124 (KPKEGPIPEERGTE) has biased composition (basic and acidic residues). The Protein kinase domain occupies 143–405 (YELGKEVGRG…AVQALTHPWL (263 aa)). Residues 149–157 (VGRGHFGHT) and K175 contribute to the ATP site. The active-site Proton acceptor is the D271. S311 is modified (phosphoserine). Position 353 is a phosphoserine; by CPK1 and CPK34 (S353). The tract at residues 409 to 439 (SRVIPLDILIYKLVKAYLHATPLRRAALKAL) is autoinhibitory domain. The calmodulin binding (CaMBD) stretch occupies residues 428–448 (ATPLRRAALKALAKALTENEL). 4 consecutive EF-hand domains span residues 446–482 (NELVYLRAQFMLLGPNKDGSVSLENFKTALMQNATDA), 483–518 (MRESRVPEILHTMESLAYRKMYFEEFCAAAISIHQL), 519–558 (EAVDAWEEIATAGFQHFETEGNRVITIEELARELNVGASA), and 559–588 (YGHLRDWVRSSDGKLSYLGFTKFLHGVTLR). Residues N461, D463, S465, K502, E507, N540, E547, S568, D570, and K572 each coordinate Ca(2+). The residue at position 574 (S574) is a Phosphoserine.

It belongs to the protein kinase superfamily. Ser/Thr protein kinase family. CDPK subfamily. In terms of assembly, binds calmodulin (CaM) in a calcium-dependent manner. Interacts with GLN1-1. Autophosphorylated. As to expression, ubiquitously expressed with higher levels in siliques and roots, especially at the root cap. Particularly present in vascular bundles of stems and leaves.

It is found in the cytoplasm. Its subcellular location is the membrane. It catalyses the reaction L-seryl-[protein] + ATP = O-phospho-L-seryl-[protein] + ADP + H(+). It carries out the reaction L-threonyl-[protein] + ATP = O-phospho-L-threonyl-[protein] + ADP + H(+). With respect to regulation, not activated by calcium. Autophosphorylation may play an important role in the regulation of the kinase activity. Stimulated by magnesium ions (optimum at 10-15 mM) and manganese ions. Its function is as follows. May play a role in signal transduction pathways that involve calcium as a second messenger. Serine/threonine kinase that phosphorylates histone H3 an GLN1-1. In Arabidopsis thaliana (Mouse-ear cress), this protein is CDPK-related kinase 3 (CRK3).